A 412-amino-acid chain; its full sequence is Serine hydroxymethyltransferase (412 aa).

Residues Leu125 and 129 to 131 (GHL) contribute to the (6S)-5,6,7,8-tetrahydrofolate site. Lys234 is modified (N6-(pyridoxal phosphate)lysine). Glu250 is a (6S)-5,6,7,8-tetrahydrofolate binding site.

The protein belongs to the SHMT family. As to quaternary structure, homodimer. Pyridoxal 5'-phosphate serves as cofactor.

It localises to the cytoplasm. It catalyses the reaction (6R)-5,10-methylene-5,6,7,8-tetrahydrofolate + glycine + H2O = (6S)-5,6,7,8-tetrahydrofolate + L-serine. It functions in the pathway one-carbon metabolism; tetrahydrofolate interconversion. It participates in amino-acid biosynthesis; glycine biosynthesis; glycine from L-serine: step 1/1. Functionally, catalyzes the reversible interconversion of serine and glycine with tetrahydrofolate (THF) serving as the one-carbon carrier. This reaction serves as the major source of one-carbon groups required for the biosynthesis of purines, thymidylate, methionine, and other important biomolecules. Also exhibits THF-independent aldolase activity toward beta-hydroxyamino acids, producing glycine and aldehydes, via a retro-aldol mechanism. This chain is Serine hydroxymethyltransferase, found in Deinococcus geothermalis (strain DSM 11300 / CIP 105573 / AG-3a).